The chain runs to 373 residues: SH3 domain-binding protein 5-like (373 aa).

Residues 1–53 (MEGKEGPSCEVRLPTPGAEREGPIHPELGAFGETASNTIKLSESSNDGKKEEI) form a disordered region. A compositionally biased stretch (polar residues) spans 34 to 45 (TASNTIKLSESS). 2 coiled-coil regions span residues 55–98 (EELD…ESAR) and 170–272 (WQEM…SEEI). Disordered stretches follow at residues 276–305 (RTQS…TGPP) and 344–373 (TGAV…SVSL). Positions 344–358 (TGAVECGGSRERGGD) are enriched in basic and acidic residues.

Belongs to the SH3BP5 family.

Functionally, functions as a guanine nucleotide exchange factor (GEF) for rab11a. This Xenopus tropicalis (Western clawed frog) protein is SH3 domain-binding protein 5-like (sh3bp5l).